The sequence spans 435 residues: DEAD-box ATP-dependent RNA helicase CshB (435 aa).

The short motif at 5 to 33 is the Q motif element; the sequence is SRFDQFGFQPFIGLAIDKLGFYEPTEVQQ. In terms of domain architecture, Helicase ATP-binding spans 36–208; sequence IPGILKGESI…SKYMENPRYE (173 aa). An ATP-binding site is contributed by 49–56; the sequence is SQTGTGKT. The short motif at 156-159 is the DEAD box element; the sequence is DEAD. The region spanning 235–378 is the Helicase C-terminal domain; the sequence is LLKNVLVGSQ…HVDWKNKEFV (144 aa). The interval 383-435 is disordered; it reads RNRRAKREAKRETADPREIGMRKKAKQKGKPNYKKKINYKMNEIKRRERRKKR. The segment covering 391 to 403 has biased composition (basic and acidic residues); sequence AKRETADPREIGM. Basic residues predominate over residues 404–420; that stretch reads RKKAKQKGKPNYKKKIN.

It belongs to the DEAD box helicase family. CshB subfamily.

Its subcellular location is the cytoplasm. The enzyme catalyses ATP + H2O = ADP + phosphate + H(+). Functionally, DEAD-box RNA helicase involved in cold tolerance, motility, and tolerance to heat, alkali and oxidative stress. The chain is DEAD-box ATP-dependent RNA helicase CshB from Listeria monocytogenes serovar 1/2a (strain ATCC BAA-679 / EGD-e).